A 386-amino-acid chain; its full sequence is Patatin-07 (386 aa).

A signal peptide spans 1 to 23 (MATTKSFLILFFMILATTSSTCA). Residues 32–229 (LSIDGGGIKG…TVADPALLSV (198 aa)) enclose the PNPLA domain. A GXGXXG motif is present at residues 36 to 41 (GGGIKG). Positions 75–79 (GTSTG) match the GXSXG motif. Ser-77 functions as the Nucleophile in the catalytic mechanism. Residues Asn-115 and Asn-202 are each glycosylated (N-linked (GlcNAc...) asparagine). Asp-215 acts as the Proton acceptor in catalysis. Residues 215–217 (DGA) carry the DGA/G motif.

It belongs to the patatin family. Tuber.

The protein resides in the vacuole. In terms of biological role, probable lipolytic acyl hydrolase (LAH), an activity which is thought to be involved in the response of tubers to pathogens. The chain is Patatin-07 from Solanum tuberosum (Potato).